Consider the following 604-residue polypeptide: MIRQCLSRRGAYSRYRLAARGVELAEPFHHQSSRPQGRRNWSSSPRCSLDIRTDTPRSRSEYVPLRKQLKEEAKAKRAAKRKGSAPPAKHDDWELTVGIEIHAQLDTDAKLFSRASAAIDDIPNSNVALFDIALPGSQPLFQPSTLIPALRAALAMNCDIQRVSRFDRKHYFYQDQPAGYQITQYYEPYAKNGSIWLQEHDGIAREDGEGVQIGIKQIQMEQDTAKSQELPSSTYLLDFNRVSRPLIEIITLPQIHSPATAAACVRKIQAILQSVGAVTTGMEMGGLRADVNVSVRKRSEGAGDHEYHGIVGLGQRTEIKNLSSFKAVEDAIIAERDRQIAVLEAGGTIEGETRGWTLGSTETRKLRGKEGEVDYRYMPDPDLGPVVIGEDVICDLQMKMPLLPDALFQMLVRNPKYKLSTADAKTMIELDDGQRLEYYQDVVDILIGLQTDLSADFSGGKAVGNWVLHELGGLLTKSSLPWDSGRVPAQSLAEIIDLLSRKEITSSSAKSLLAMVFDGDKRSVAQIVEDENLRFQSLSRGEYIALAEEVMRQNPKMVSEIREKGQLGKIGWFVGQIKRIGDANRVEAQKAEEILRELILKKNS.

The N-terminal 48 residues, 1 to 48, are a transit peptide targeting the mitochondrion; that stretch reads MIRQCLSRRGAYSRYRLAARGVELAEPFHHQSSRPQGRRNWSSSPRCS. The interval 28-57 is disordered; sequence FHHQSSRPQGRRNWSSSPRCSLDIRTDTPR. A compositionally biased stretch (polar residues) spans 33-46; the sequence is SRPQGRRNWSSSPR.

The protein belongs to the GatB/GatE family. GatB subfamily. In terms of assembly, subunit of the heterotrimeric GatCAB amidotransferase (AdT) complex, composed of A, B and C subunits.

It is found in the mitochondrion. It carries out the reaction L-glutamyl-tRNA(Gln) + L-glutamine + ATP + H2O = L-glutaminyl-tRNA(Gln) + L-glutamate + ADP + phosphate + H(+). Allows the formation of correctly charged Gln-tRNA(Gln) through the transamidation of misacylated Glu-tRNA(Gln) in the mitochondria. The reaction takes place in the presence of glutamine and ATP through an activated gamma-phospho-Glu-tRNA(Gln). The protein is Glutamyl-tRNA(Gln) amidotransferase subunit B, mitochondrial of Blastomyces gilchristii (strain SLH14081) (Blastomyces dermatitidis).